Here is a 1023-residue protein sequence, read N- to C-terminus: Transmembrane protein 132A (1023 aa).

A signal peptide spans 1–35 (MCARMAGRTTAAPRGPYGPWLCLLVALALDVVRVD). The Extracellular segment spans residues 36–852 (CGQAPLDPVY…VTELELGMYA (817 aa)). Positions 212–246 (AAEGPGGCGSGEENDPGEQALPVGGVELRPADPPQ) are disordered. Asn280 carries N-linked (GlcNAc...) asparagine glycosylation. Disordered stretches follow at residues 512–533 (WRVP…DEAE) and 766–839 (LPPA…MVPA). A compositionally biased stretch (low complexity) spans 515–527 (PGPAEGPAEPAAE). Ser529 bears the Phosphoserine; by FAM20C mark. The tract at residues 611-916 (IEVRSPLSDS…RQLDRQSPGP (306 aa)) is binds to HSPA5/GRP78. The interval 671-1023 (LPAPKQEVAL…NYMERIRGSS (353 aa)) is confers cellular localization similar to full-length form. Residues 778-790 (SSPAWSPPATEAT) are compositionally biased toward low complexity. Positions 809–823 (GKFERAEEEARKEET) are enriched in basic and acidic residues. Acidic residues predominate over residues 824-836 (EAREEEEEEEEEM). Residues 853-873 (LLGVFCVAIFIFLVNGVVFVL) traverse the membrane as a helical segment. Over 874-1023 (RYQRKEPPDS…NYMERIRGSS (150 aa)) the chain is Cytoplasmic. The tract at residues 905-961 (LSRQLDRQSPGPPKGEGSCPCESGGGGEAPTLAPGPPGGTTSSSSTLARKEAGGRRK) is disordered.

This sequence belongs to the TMEM132 family. Interacts with HSPA5/GRP78.

It localises to the golgi apparatus membrane. Its subcellular location is the endoplasmic reticulum membrane. Functionally, may play a role in embryonic and postnatal development of the brain. Increased resistance to cell death induced by serum starvation in cultured cells. Regulates cAMP-induced GFAP gene expression via STAT3 phosphorylation. The polypeptide is Transmembrane protein 132A (TMEM132A) (Homo sapiens (Human)).